The following is a 131-amino-acid chain: Sec-independent protein translocase protein TatB (131 aa).

The helical transmembrane segment at 2 to 22 threads the bilayer; it reads LGSLSWEHMLVLVVVGLVVLG. Residues 96-131 form a disordered region; the sequence is AFDRPVNGAAAQPPPAPAPPPEPHRSGQTPFDADAT. Residues 107 to 116 are compositionally biased toward pro residues; sequence QPPPAPAPPP.

This sequence belongs to the TatB family. In terms of assembly, the Tat system comprises two distinct complexes: a TatABC complex, containing multiple copies of TatA, TatB and TatC subunits, and a separate TatA complex, containing only TatA subunits. Substrates initially bind to the TatABC complex, which probably triggers association of the separate TatA complex to form the active translocon.

The protein resides in the cell membrane. Its function is as follows. Part of the twin-arginine translocation (Tat) system that transports large folded proteins containing a characteristic twin-arginine motif in their signal peptide across membranes. Together with TatC, TatB is part of a receptor directly interacting with Tat signal peptides. TatB may form an oligomeric binding site that transiently accommodates folded Tat precursor proteins before their translocation. This is Sec-independent protein translocase protein TatB from Mycolicibacterium paratuberculosis (strain ATCC BAA-968 / K-10) (Mycobacterium paratuberculosis).